A 156-amino-acid chain; its full sequence is ATP synthase subunit b (156 aa).

The chain crosses the membrane as a helical span at residues 7–29; sequence LFGQTVAFILFVWFCMKFVWPPL.

It belongs to the ATPase B chain family. As to quaternary structure, F-type ATPases have 2 components, F(1) - the catalytic core - and F(0) - the membrane proton channel. F(1) has five subunits: alpha(3), beta(3), gamma(1), delta(1), epsilon(1). F(0) has three main subunits: a(1), b(2) and c(10-14). The alpha and beta chains form an alternating ring which encloses part of the gamma chain. F(1) is attached to F(0) by a central stalk formed by the gamma and epsilon chains, while a peripheral stalk is formed by the delta and b chains.

Its subcellular location is the cell inner membrane. Functionally, f(1)F(0) ATP synthase produces ATP from ADP in the presence of a proton or sodium gradient. F-type ATPases consist of two structural domains, F(1) containing the extramembraneous catalytic core and F(0) containing the membrane proton channel, linked together by a central stalk and a peripheral stalk. During catalysis, ATP synthesis in the catalytic domain of F(1) is coupled via a rotary mechanism of the central stalk subunits to proton translocation. In terms of biological role, component of the F(0) channel, it forms part of the peripheral stalk, linking F(1) to F(0). The chain is ATP synthase subunit b from Shewanella frigidimarina (strain NCIMB 400).